The sequence spans 214 residues: Transcription factor MYB24 (214 aa).

HTH myb-type domains are found at residues 14-66 and 67-121; these read DAEV…LNYL and RPDV…QKYI. 2 consecutive DNA-binding regions (H-T-H motif) follow at residues 42-66 and 94-117; these read WNSL…LNYL and WSKI…RTKI.

Interacts (via N-terminus) with TIFY10A/JAZ1, TIFY5A/JAZ8 AND TIFY3A/JAZ11. Expressed specifically in flowers. Expressed in all four whorls of the flower and in the vascular tissue of stamen filament and sepals. Detected in male and female gametophytes, especially in microspores and ovules. Weakly expressed in petals and the upper part of pistils.

The protein resides in the nucleus. Transcription factor acting redundantly with MYB21 and MYB57 to control stamen filament elongation in the late developed flowers. Contributes with MYB21 to induction of MYB108 by jasmonate. Repressed at the transcript levels by DELLA proteins. The protein is Transcription factor MYB24 (MYB24) of Arabidopsis thaliana (Mouse-ear cress).